The chain runs to 83 residues: CLAVATA3/ESR (CLE)-related protein 3 (83 aa).

The first 24 residues, 1 to 24 (MASLKLWVCLVLLLVLELTSVHEC), serve as a signal peptide directing secretion. Residues 38-58 (RLKKIRRELFERLKEMKGRSE) are a coiled coil. A disordered region spans residues 53-83 (MKGRSEGEETILGNTLDSKRLSPGGPDPRHH). 2 positions are modified to hydroxyproline: proline 75 and proline 78. A glycan (O-linked (Ara...) hydroxyproline) is linked at proline 78.

Belongs to the CLV3/ESR signal peptide family. Post-translationally, the O-glycosylation (arabinosylation) of the hydroxyproline Pro-78 enhances binding affinity of the CLE3p peptide for its receptor. Mostly expressed in roots, stems and apex, and, to a lower extent, in seedlings, leaves, flowers, siliques and pollen.

It localises to the secreted. The protein resides in the extracellular space. Its function is as follows. Extracellular signal peptide that regulates cell fate. The protein is CLAVATA3/ESR (CLE)-related protein 3 of Arabidopsis thaliana (Mouse-ear cress).